An 869-amino-acid polypeptide reads, in one-letter code: Bifunctional uridylyltransferase/uridylyl-removing enzyme (869 aa).

Residues 1-332 form a uridylyltransferase region; that stretch reads MTDTPAERPD…QFDGEATPEP (332 aa). Residues 333–691 form a uridylyl-removing region; the sequence is LGGGFSLRRG…RRAVPDNDAL (359 aa). Residues 450-572 form the HD domain; it reads VDQHTLMVLR…VGTRERLDYL (123 aa). 2 consecutive ACT domains span residues 692 to 774 and 798 to 869; these read EVFV…RAVP and RISL…LDPV.

This sequence belongs to the GlnD family. Mg(2+) is required as a cofactor.

It carries out the reaction [protein-PII]-L-tyrosine + UTP = [protein-PII]-uridylyl-L-tyrosine + diphosphate. It catalyses the reaction [protein-PII]-uridylyl-L-tyrosine + H2O = [protein-PII]-L-tyrosine + UMP + H(+). Uridylyltransferase (UTase) activity is inhibited by glutamine, while glutamine activates uridylyl-removing (UR) activity. Modifies, by uridylylation and deuridylylation, the PII regulatory proteins (GlnB and homologs), in response to the nitrogen status of the cell that GlnD senses through the glutamine level. Under low glutamine levels, catalyzes the conversion of the PII proteins and UTP to PII-UMP and PPi, while under higher glutamine levels, GlnD hydrolyzes PII-UMP to PII and UMP (deuridylylation). Thus, controls uridylylation state and activity of the PII proteins, and plays an important role in the regulation of nitrogen assimilation and metabolism. The chain is Bifunctional uridylyltransferase/uridylyl-removing enzyme from Xanthomonas euvesicatoria pv. vesicatoria (strain 85-10) (Xanthomonas campestris pv. vesicatoria).